We begin with the raw amino-acid sequence, 369 residues long: Maltose/maltodextrin import ATP-binding protein MalK (369 aa).

One can recognise an ABC transporter domain in the interval 4–234 (VQLRNVTKAW…PADRFVAGFI (231 aa)). Position 36-43 (36-43 (GPSGCGKS)) interacts with ATP.

Belongs to the ABC transporter superfamily. Maltooligosaccharide importer (TC 3.A.1.1.1) family. In terms of assembly, the complex is composed of two ATP-binding proteins (MalK), two transmembrane proteins (MalG and MalK) and a solute-binding protein (MalE).

It is found in the cell inner membrane. It carries out the reaction D-maltose(out) + ATP + H2O = D-maltose(in) + ADP + phosphate + H(+). Functionally, part of the ABC transporter complex MalEFGK involved in maltose/maltodextrin import. Responsible for energy coupling to the transport system. The sequence is that of Maltose/maltodextrin import ATP-binding protein MalK from Salmonella choleraesuis (strain SC-B67).